Consider the following 78-residue polypeptide: Vacuolar ATPase assembly integral membrane protein VMA21 (78 aa).

At 1 to 14 the chain is on the cytoplasmic side; the sequence is MPADIPKSVVQKLV. Residues 15–35 traverse the membrane as a helical segment; sequence FFTAAMIICPVATFFICQYLF. The Lumenal segment spans residues 36 to 38; it reads SNN. A helical transmembrane segment spans residues 39–59; it reads AIISGGVSALVANIVLIGYVV. Residues 60 to 78 lie on the Cytoplasmic side of the membrane; it reads AAFMEDTTEQEPEETKKSR. Residues 75–78 carry the Prevents secretion from ER motif; that stretch reads KKSR.

The protein belongs to the VMA21 family.

The protein resides in the endoplasmic reticulum membrane. Its subcellular location is the endoplasmic reticulum-Golgi intermediate compartment membrane. The protein localises to the cytoplasmic vesicle. It localises to the COPII-coated vesicle membrane. Functionally, required for the assembly of the V0 complex of the vacuolar ATPase (V-ATPase) in the endoplasmic reticulum. This chain is Vacuolar ATPase assembly integral membrane protein VMA21, found in Debaryomyces hansenii (strain ATCC 36239 / CBS 767 / BCRC 21394 / JCM 1990 / NBRC 0083 / IGC 2968) (Yeast).